Consider the following 190-residue polypeptide: 2-phospho-L-lactate guanylyltransferase (190 aa).

This sequence belongs to the CofC family. Homodimer.

The enzyme catalyses (2S)-2-phospholactate + GTP + H(+) = (2S)-lactyl-2-diphospho-5'-guanosine + diphosphate. The protein operates within cofactor biosynthesis; coenzyme F420 biosynthesis. Functionally, guanylyltransferase that catalyzes the activation of (2S)-2-phospholactate (2-PL) as (2S)-lactyl-2-diphospho-5'-guanosine, via the condensation of 2-PL with GTP. It is involved in the biosynthesis of coenzyme F420, a hydride carrier cofactor. The protein is 2-phospho-L-lactate guanylyltransferase of Methanopyrus kandleri (strain AV19 / DSM 6324 / JCM 9639 / NBRC 100938).